Here is a 640-residue protein sequence, read N- to C-terminus: Threonine--tRNA ligase (640 aa).

The catalytic stretch occupies residues 224 to 525 (DHRKLGKELD…LTEHYAGAFP (302 aa)). Zn(2+)-binding residues include C323, H374, and H502.

Belongs to the class-II aminoacyl-tRNA synthetase family. Homodimer. Zn(2+) is required as a cofactor.

The protein resides in the cytoplasm. It catalyses the reaction tRNA(Thr) + L-threonine + ATP = L-threonyl-tRNA(Thr) + AMP + diphosphate + H(+). Catalyzes the attachment of threonine to tRNA(Thr) in a two-step reaction: L-threonine is first activated by ATP to form Thr-AMP and then transferred to the acceptor end of tRNA(Thr). Also edits incorrectly charged L-seryl-tRNA(Thr). The chain is Threonine--tRNA ligase from Tropheryma whipplei (strain Twist) (Whipple's bacillus).